The primary structure comprises 654 residues: Threonine--tRNA ligase (654 aa).

Residues 1 to 63 enclose the TGS domain; it reads MAQISLTFPD…DADASIAIHT (63 aa). The tract at residues 247–544 is catalytic; it reads DHRKLGREMN…LIENFAGKLP (298 aa). Positions 344, 395, and 521 each coordinate Zn(2+).

It belongs to the class-II aminoacyl-tRNA synthetase family. As to quaternary structure, homodimer. Zn(2+) serves as cofactor.

Its subcellular location is the cytoplasm. The catalysed reaction is tRNA(Thr) + L-threonine + ATP = L-threonyl-tRNA(Thr) + AMP + diphosphate + H(+). Catalyzes the attachment of threonine to tRNA(Thr) in a two-step reaction: L-threonine is first activated by ATP to form Thr-AMP and then transferred to the acceptor end of tRNA(Thr). Also edits incorrectly charged L-seryl-tRNA(Thr). This chain is Threonine--tRNA ligase, found in Dinoroseobacter shibae (strain DSM 16493 / NCIMB 14021 / DFL 12).